We begin with the raw amino-acid sequence, 195 residues long: Small ribosomal subunit protein uS10c (195 aa).

The transit peptide at 1–59 (MATSSISAALLSPLTLRNASSSSTKQDFSTLSSLNLRRTLTPTLQSGHTLSNSSNFATF) directs the protein to the chloroplast.

This sequence belongs to the universal ribosomal protein uS10 family. As to quaternary structure, component of the chloroplast small ribosomal subunit (SSU). Mature 70S chloroplast ribosomes of higher plants consist of a small (30S) and a large (50S) subunit. The 30S small subunit contains 1 molecule of ribosomal RNA (16S rRNA) and 24 different proteins. The 50S large subunit contains 3 rRNA molecules (23S, 5S and 4.5S rRNA) and 33 different proteins.

It localises to the plastid. It is found in the chloroplast. Its function is as follows. Component of the chloroplast ribosome (chloro-ribosome), a dedicated translation machinery responsible for the synthesis of chloroplast genome-encoded proteins, including proteins of the transcription and translation machinery and components of the photosynthetic apparatus. The chain is Small ribosomal subunit protein uS10c (RPS10) from Spinacia oleracea (Spinach).